We begin with the raw amino-acid sequence, 131 residues long: Small ribosomal subunit protein uS8 (131 aa).

The protein belongs to the universal ribosomal protein uS8 family. Part of the 30S ribosomal subunit. Contacts proteins S5 and S12.

One of the primary rRNA binding proteins, it binds directly to 16S rRNA central domain where it helps coordinate assembly of the platform of the 30S subunit. In Campylobacter hominis (strain ATCC BAA-381 / DSM 21671 / CCUG 45161 / LMG 19568 / NCTC 13146 / CH001A), this protein is Small ribosomal subunit protein uS8.